The following is a 522-amino-acid chain: MKWFKYGDGMDLFADMRQEAAGEKERVVMHSQEPWCVLLVDDDEQMHQITRLALTGFKFQNRPLELISVLSGLEARKVMAERSDIALALVDVVMETEHAGLDLVRYIREELQNRQVRLVLRTGQAGQAPEDRVIKEYEIDDYKEKTELTTQKLRTLLYSMLRAYRDLCLIEDQKLGLSHVIEASANVQNTKSLQSYATAVLNQLTSLLKLHASAFYCVATPCPDSEKCNALTVATTAERVELYVESPFKGLPEDVQRRCKEVLSQRTTRDYGDAYVFFKQDERGVDSVLYVGFEQELSELDRKLLEIYMYNIGLTFENINLMVDLRETSKELVYNLANAVEARSRETGAHVQRVALYCERLAHLYGLAESEADMIKNASPLHDVGKVAIPDSILHKPGKLDAQEWAIMQKHVEYGVEILNRSKRRLMQVAKEIAATHHEKWDGSGYPNRLQGDDIPISGRITAIADVFDALGAKRSYKDPWTDEQIREELMAQKGRHFEPKLVELLLEHWDEFIAIRASLPD.

The region spanning 36–160 (CVLLVDDDEQ…QKLRTLLYSM (125 aa)) is the Response regulatory domain. At Asp-91 the chain carries 4-aspartylphosphate. The region spanning 325-522 (LRETSKELVY…FIAIRASLPD (198 aa)) is the HD-GYP domain. His-382 and Asp-383 together coordinate a divalent metal cation. Lys-386 (proton donor) is an active-site residue. A divalent metal cation is bound by residues His-411, His-437, His-438, and Asp-466.

As to quaternary structure, homodimer. Mn(2+) is required as a cofactor.

The catalysed reaction is 3',3'-cGAMP + H2O = 5'-pApG-3' + H(+). Phosphodiesterase (PDE) that catalyzes the hydrolysis of 3'3'-cyclic GMP-AMP (3'3'-cGAMP), leading to linear 5'-pApG. Counteracts the function of the 3'3'-cGAMP synthase DncV, and is involved in the modulation of intracellular 3'3'-cGAMP levels. Enhances bacterial chemotaxis and inhibits intestinal colonization in vivo. Thus exerts a crucial role in regulating bacterial infectivity through catalyzing 3'3'-cGAMP degradation. Is specific for 3'3'-cGAMP since it cannot degrade other cGAMP linkage isomers (3'2'-, 2'3'-, and 2'2'-cGAMPs). Is also able to hydrolyze c-di-GMP but not c-di-AMP. This is 3'3'-cGAMP-specific phosphodiesterase 2 from Vibrio cholerae serotype O1 (strain ATCC 39315 / El Tor Inaba N16961).